The sequence spans 427 residues: 3-phosphoshikimate 1-carboxyvinyltransferase (427 aa).

3-phosphoshikimate-binding residues include K22, S23, and R27. Position 22 (K22) interacts with phosphoenolpyruvate. Phosphoenolpyruvate contacts are provided by G96 and R124. 3-phosphoshikimate contacts are provided by S169, S170, Q171, S197, D313, N336, and K340. Phosphoenolpyruvate is bound at residue Q171. D313 functions as the Proton acceptor in the catalytic mechanism. The phosphoenolpyruvate site is built by R344, R386, and K411.

The protein belongs to the EPSP synthase family. Monomer.

Its subcellular location is the cytoplasm. It carries out the reaction 3-phosphoshikimate + phosphoenolpyruvate = 5-O-(1-carboxyvinyl)-3-phosphoshikimate + phosphate. Its pathway is metabolic intermediate biosynthesis; chorismate biosynthesis; chorismate from D-erythrose 4-phosphate and phosphoenolpyruvate: step 6/7. Catalyzes the transfer of the enolpyruvyl moiety of phosphoenolpyruvate (PEP) to the 5-hydroxyl of shikimate-3-phosphate (S3P) to produce enolpyruvyl shikimate-3-phosphate and inorganic phosphate. The protein is 3-phosphoshikimate 1-carboxyvinyltransferase of Shigella flexneri serotype 5b (strain 8401).